The following is a 558-amino-acid chain: Polypeptide N-acetylgalactosaminyltransferase 16 (558 aa).

The Cytoplasmic segment spans residues 1–6 (MRKIRA). The helical; Signal-anchor for type II membrane protein transmembrane segment at 7-26 (NAIAILTVAWILGTFYYLWQ) threads the bilayer. Over 27 to 558 (DNRAHAASSS…AQQWQLLPHT (532 aa)) the chain is Lumenal. A compositionally biased stretch (low complexity) spans 34-46 (SSSGRGAQRAGGR). Positions 34–53 (SSSGRGAQRAGGRPEQLRED) are disordered. 5 disulfides stabilise this stretch: cysteine 113–cysteine 340, cysteine 331–cysteine 409, cysteine 441–cysteine 460, cysteine 486–cysteine 506, and cysteine 530–cysteine 543. Positions 122–227 (LPATSVIITF…VEWLQPMLQR (106 aa)) are catalytic subdomain A. 2 residues coordinate substrate: aspartate 163 and arginine 188. Position 211 (aspartate 211) interacts with Mn(2+). Residue serine 212 coordinates substrate. Residue histidine 213 participates in Mn(2+) binding. A catalytic subdomain B region spans residues 286–348 (PIRTPVIAGG…PCSRVGHVFR (63 aa)). A substrate-binding site is contributed by tryptophan 317. Residue histidine 345 coordinates Mn(2+). Substrate is bound by residues arginine 348, histidine 351, and tyrosine 353. Residues 428 to 555 (KEVLPGVIKQ…DAQAQQWQLL (128 aa)) form the Ricin B-type lectin domain.

It belongs to the glycosyltransferase 2 family. GalNAc-T subfamily. The cofactor is Mn(2+). As to expression, in the CNS, it is predominantly expressed in several distinct hypothalamic, thalamic and amygdaloid nuclei. The most abundant level of expression is in the paraventricular, ventromedial and arcuate nuclei of the hypothalamus, the anterodorsal and parafascicular nuclei of the thalamus and the central, basomedial and medial nuclei of the amygdala. Also expressed in cerebral cortex, lateral septum, habenula and hippocampus.

It is found in the golgi apparatus membrane. The enzyme catalyses L-seryl-[protein] + UDP-N-acetyl-alpha-D-galactosamine = a 3-O-[N-acetyl-alpha-D-galactosaminyl]-L-seryl-[protein] + UDP + H(+). The catalysed reaction is L-threonyl-[protein] + UDP-N-acetyl-alpha-D-galactosamine = a 3-O-[N-acetyl-alpha-D-galactosaminyl]-L-threonyl-[protein] + UDP + H(+). It functions in the pathway protein modification; protein glycosylation. In terms of biological role, catalyzes the initial reaction in O-linked oligosaccharide biosynthesis, the transfer of an N-acetyl-D-galactosamine residue to a serine or threonine residue on the protein receptor. In Mus musculus (Mouse), this protein is Polypeptide N-acetylgalactosaminyltransferase 16 (Galnt16).